We begin with the raw amino-acid sequence, 300 residues long: Protein TRACHEARY ELEMENT DIFFERENTIATION-RELATED 7A (300 aa).

The segment at 1-181 (MASPLSQSVF…HIIPPPPPSP (181 aa)) is disordered. The Extracellular portion of the chain corresponds to 1–187 (MASPLSQSVF…PPSPSNHSTT (187 aa)). Over residues 12-181 (HFPPPSPAAT…HIIPPPPPSP (170 aa)) the composition is skewed to pro residues. Residue asparagine 183 is glycosylated (N-linked (GlcNAc...) asparagine). A helical transmembrane segment spans residues 188 to 208 (IVVIFVSCGGVFFLAFAMAAL). The Cytoplasmic portion of the chain corresponds to 209–300 (WCFLKKKKKK…SSFGHHYLHG (92 aa)).

Accumulates in cells differentiating into tracheary element (TE) which undergo secondary cell wall (SCW) formation.

Its subcellular location is the cell membrane. It localises to the secreted. The protein resides in the cell wall. In terms of biological role, involved in the secondary cell wall (SCW) formation of vessel elements (e.g. protoxylem and metaxylem), thus promoting tracheary element (TE) differentiation. This is Protein TRACHEARY ELEMENT DIFFERENTIATION-RELATED 7A from Zinnia elegans (Garden zinnia).